We begin with the raw amino-acid sequence, 215 residues long: Ras-related protein Rab-5A (215 aa).

10 residues coordinate GTP: serine 29, alanine 30, glycine 32, lysine 33, serine 34, serine 35, histidine 46, glutamate 47, threonine 52, and glycine 78. Mg(2+) is bound at residue serine 34. 2 short sequence motifs (switch) span residues glutamine 44–alanine 56 and alanine 77–alanine 93. A Mg(2+)-binding site is contributed by threonine 52. Residue serine 84 is modified to Phosphoserine. GTP contacts are provided by asparagine 133, lysine 134, aspartate 136, alanine 164, and lysine 165. Positions glutamate 185–asparagine 215 are disordered. Positions glutamate 203 to asparagine 215 are enriched in polar residues. S-geranylgeranyl cysteine attachment occurs at residues cysteine 212 and cysteine 213.

This sequence belongs to the small GTPase superfamily. Rab family. In terms of assembly, interacts with GDI1; this promotes dissociation from membranes; phosphorylation at Ser-84 disrupts this interaction. Interacts with GDI2; phosphorylation at Ser-84 disrupts the interaction. Interacts with SGSM1 and SGSM3. Interacts with PIK3CB. Interacts with RIN1 and GAPVD1, which regulate its pathway, probably by acting as a GEF. Interacts with RINL. Interacts with ALS2CL, SUN2, ZFYVE20 and RUFY1. Interacts with RABEP1; one RABEP1 homodimer binds two RAB5A chains, but at opposite sides of the dimer. Interacts with OCRL and INPP5F. May be a component of a complex composed of RAB5A, DYN2 and PIK3C3. Does not interact with the BLOC-3 complex (heterodimer of HPS1 and HPS4). Interacts with CLN5. Interacts with APPL2. Interacts with F8A1/F8A2/F8A3. Found in a complex with F8A1/F8A2/F8A3, HTT and RAB5A; mediates the recruitment of HTT by RAB5A onto early endosomes. Interacts with ATP9A. Interacts with PPP1R21; mediates the recruitment of FERRY complex by RAB5A onto early endosomes. The cofactor is Mg(2+). Post-translationally, phosphorylation of Ser-84 in the switch II region by LRRK2 prevents the association of RAB regulatory proteins, including RAB GDP dissociation inhibitors GDI1 and GDI2.

It localises to the cell membrane. Its subcellular location is the early endosome membrane. The protein localises to the melanosome. The protein resides in the cytoplasmic vesicle. It is found in the cell projection. It localises to the ruffle. Its subcellular location is the membrane. The protein localises to the cytoplasm. The protein resides in the cytosol. It is found in the phagosome membrane. It localises to the endosome membrane. The enzyme catalyses GTP + H2O = GDP + phosphate + H(+). Its activity is regulated as follows. Regulated by guanine nucleotide exchange factors (GEFs) including RINL, which promote the exchange of bound GDP for free GTP. Regulated by GTPase activating proteins (GAPs) which increase the GTP hydrolysis activity. Inhibited by GDP dissociation inhibitors (GDIs). Functionally, the small GTPases Rab are key regulators of intracellular membrane trafficking, from the formation of transport vesicles to their fusion with membranes. Rabs cycle between an inactive GDP-bound form and an active GTP-bound form that is able to recruit to membranes different sets of downstream effectors directly responsible for vesicle formation, movement, tethering and fusion. RAB5A is required for the fusion of plasma membranes and early endosomes. Contributes to the regulation of filopodia extension. Required for the exosomal release of SDCBP, CD63, PDCD6IP and syndecan. Regulates maturation of apoptotic cell-containing phagosomes, probably downstream of DYN2 and PIK3C3. The sequence is that of Ras-related protein Rab-5A (RAB5A) from Sus scrofa (Pig).